A 645-amino-acid polypeptide reads, in one-letter code: Protein FAM47B (645 aa).

Composition is skewed to basic and acidic residues over residues 1 to 11 (MGDRRPQDRPR), 238 to 251 (EPPE…RVDP), and 288 to 299 (PETRVSHLHPEP). Disordered stretches follow at residues 1 to 23 (MGDR…WYCD) and 168 to 321 (AREK…SLCP).

It belongs to the FAM47 family.

This chain is Protein FAM47B (FAM47B), found in Homo sapiens (Human).